The sequence spans 210 residues: 3-demethoxyubiquinol 3-hydroxylase (210 aa).

Residues E59, E89, H92, E141, E173, and H176 each contribute to the Fe cation site.

Belongs to the COQ7 family. Fe cation is required as a cofactor.

The protein localises to the cell membrane. The catalysed reaction is a 5-methoxy-2-methyl-3-(all-trans-polyprenyl)benzene-1,4-diol + AH2 + O2 = a 3-demethylubiquinol + A + H2O. Its pathway is cofactor biosynthesis; ubiquinone biosynthesis. Its function is as follows. Catalyzes the hydroxylation of 2-nonaprenyl-3-methyl-6-methoxy-1,4-benzoquinol during ubiquinone biosynthesis. The chain is 3-demethoxyubiquinol 3-hydroxylase from Marinomonas sp. (strain MWYL1).